Consider the following 345-residue polypeptide: Arginine N-succinyltransferase (345 aa).

Leucine 125 lines the succinyl-CoA pocket. Histidine 229 (proton donor) is an active-site residue.

The protein belongs to the arginine N-succinyltransferase family.

The enzyme catalyses succinyl-CoA + L-arginine = N(2)-succinyl-L-arginine + CoA + H(+). Its pathway is amino-acid degradation; L-arginine degradation via AST pathway; L-glutamate and succinate from L-arginine: step 1/5. Its function is as follows. Catalyzes the transfer of succinyl-CoA to arginine to produce N(2)-succinylarginine. This Yersinia enterocolitica serotype O:8 / biotype 1B (strain NCTC 13174 / 8081) protein is Arginine N-succinyltransferase.